We begin with the raw amino-acid sequence, 463 residues long: tRNA-2-methylthio-N(6)-dimethylallyladenosine synthase (463 aa).

The MTTase N-terminal domain maps to 19–135; it reads GSYWITTFGC…LESLLNQVDS (117 aa). Positions 28, 64, 98, 170, 174, and 177 each coordinate [4Fe-4S] cluster. The Radical SAM core domain occupies 156-393; the sequence is RDSSICGWVN…NSLVENIAKE (238 aa). Residues 396-463 form the TRAM domain; sequence QRYKNTSQEI…RPFSLTAKLL (68 aa).

Belongs to the methylthiotransferase family. MiaB subfamily. As to quaternary structure, monomer. Requires [4Fe-4S] cluster as cofactor.

The protein localises to the cytoplasm. The catalysed reaction is N(6)-dimethylallyladenosine(37) in tRNA + (sulfur carrier)-SH + AH2 + 2 S-adenosyl-L-methionine = 2-methylsulfanyl-N(6)-dimethylallyladenosine(37) in tRNA + (sulfur carrier)-H + 5'-deoxyadenosine + L-methionine + A + S-adenosyl-L-homocysteine + 2 H(+). Catalyzes the methylthiolation of N6-(dimethylallyl)adenosine (i(6)A), leading to the formation of 2-methylthio-N6-(dimethylallyl)adenosine (ms(2)i(6)A) at position 37 in tRNAs that read codons beginning with uridine. This chain is tRNA-2-methylthio-N(6)-dimethylallyladenosine synthase, found in Prochlorococcus marinus (strain NATL2A).